The following is a 137-amino-acid chain: Cellular retinoic acid-binding protein 1 (137 aa).

Residues 21–31 (KALGVNAMLRK) carry the Nuclear localization signal motif. 132-134 (RIY) is a binding site for all-trans-retinoate.

It belongs to the calycin superfamily. Fatty-acid binding protein (FABP) family.

The protein resides in the cytoplasm. Its function is as follows. Cytosolic CRABPs may regulate the access of retinoic acid to the nuclear retinoic acid receptors. The sequence is that of Cellular retinoic acid-binding protein 1 (CRABP1) from Gallus gallus (Chicken).